A 625-amino-acid polypeptide reads, in one-letter code: Basic helix-loop-helix ARNT-like protein 1 (625 aa).

The segment at 1–60 (MADQRMDISSTISDFMSPGPTDLLSSSLGTSGVDCNRKRKGSSTDYQESMDTDKDDPHGR) is disordered. Ser-17 carries the phosphoserine; by GSK3-beta modification. Positions 17–32 (SPGPTDLLSSSLGTSG) are enriched in low complexity. A Phosphothreonine; by GSK3-beta modification is found at Thr-21. The Nuclear localization signal signature appears at 36-41 (NRKRKG). Positions 51-60 (DTDKDDPHGR) are enriched in basic and acidic residues. The region spanning 72-125 (NAREAHSQIEKRRRDKMNSFIDELASLVPTCNAMSRKLDKLTVLRMAVQHMKTL) is the bHLH domain. Ser-78 is modified (phosphoserine). Ser-90 is modified (phosphoserine; by CK2). The short motif at 142 to 152 (LSDDELKHLIL) is the Nuclear export signal 1 element. One can recognise a PAS 1 domain in the interval 143–215 (SDDELKHLIL…EQLSSSDTAP (73 aa)). Residue Lys-252 forms a Glycyl lysine isopeptide (Lys-Gly) (interchain with G-Cter in SUMO2 and SUMO3) linkage. A Glycyl lysine isopeptide (Lys-Gly) (interchain with G-Cter in SUMO); alternate cross-link involves residue Lys-259. Lys-259 is covalently cross-linked (Glycyl lysine isopeptide (Lys-Gly) (interchain with G-Cter in SUMO2); alternate). A PAS 2 domain is found at 325 to 395 (PQPVNGEIRV…ECHRQVLQTR (71 aa)). A Nuclear export signal 2 motif is present at residues 360 to 368 (LAYLPQELL). The PAC domain occupies 400–443 (TNCYKFKIKDGSFITLRSRWFSFMNPWTKEVEYIVSTNTVVLAN). Disordered regions lie at residues 454 to 491 (QLTA…RAGA) and 510 to 594 (GSSP…SPSN). An interaction with CIART region spans residues 507–587 (RIRGSSPSSC…IGIDMIDNDQ (81 aa)). A compositionally biased stretch (low complexity) spans 510–520 (GSSPSSCGSSP). Residue Lys-537 is modified to N6-acetyllysine.

As to quaternary structure, component of the circadian clock oscillator which includes the CRY1/2 proteins, CLOCK or NPAS2, BMAL1 or BMAL2, CSNK1D and/or CSNK1E, TIMELESS and the PER1/2/3 proteins. Forms a heterodimer with CLOCK. The CLOCK-BMAL1 heterodimer is required for E-box-dependent transactivation, for CLOCK nuclear translocation and degradation, and, for phosphorylation of both CLOCK and BMAL1. Part of a nuclear complex which also includes RACK1 and PRKCA; RACK1 and PRKCA are recruited to the complex in a circadian manner. Interacts with NPAS2. Interacts with EZH2. Interacts with SUMO3. Interacts with SIRT1. Interacts with AHR. Interacts with ID1, ID2 and ID3. Interacts with DDX4. Interacts with OGT. Interacts with EED and SUZ12. Interacts with MTA1. Interacts with CIART. Interacts with HSP90. Interacts with KAT2B and EP300. Interacts with BHLHE40/DEC1 and BHLHE41/DEC2. Interacts with RELB and the interaction is enhanced in the presence of CLOCK. Interacts with PER1, PER2, CRY1 and CRY2 and this interaction requires a translocation to the nucleus. Interaction of the CLOCK-BMAL1 heterodimer with PER or CRY inhibits transcription activation. Interaction of the CLOCK-BMAL1 with CRY1 is independent of DNA but with PER2 is off DNA. The CLOCK-BMAL1 heterodimer interacts with GSK3B. Interacts with KDM5A. Interacts with KMT2A; in a circadian manner. Interacts with UBE3A. Interacts with PRKCG. Interacts with MAGEL2. Interacts with NCOA2. Interacts with THRAP3. The CLOCK-BMAL1 heterodimer interacts with PASD1. Interacts with PASD1. Interacts with USP9X. Interacts with PIWIL2 (via PIWI domain). Interacts with HDAC3. Interacts with HNF4A. Ubiquitinated, leading to its proteasomal degradation. Deubiquitinated by USP9X. Post-translationally, O-glycosylated; contains O-GlcNAc. O-glycosylation by OGT prevents protein degradation by inhibiting ubiquitination. It also stabilizes the CLOCK-BMAL1 heterodimer thereby increasing CLOCK-BMAL1-mediated transcription of genes in the negative loop of the circadian clock such as PER1/2/3 and CRY1/2. In terms of processing, acetylated on Lys-537 by CLOCK during the repression phase of the circadian cycle. Acetylation facilitates recruitment of CRY1 protein and initiates the repression phase of the circadian cycle. Acetylated at Lys-537 by KAT5 during the activation phase of the cycle, leading to recruitment of the positive transcription elongation factor b (P-TEFb) and BRD4, followed by productive elongation of circadian transcripts. Deacetylated by SIRT1, which may result in decreased protein stability. Phosphorylated upon dimerization with CLOCK. Phosphorylation enhances the transcriptional activity, alters the subcellular localization and decreases the stability of the CLOCK-BMAL1 heterodimer by promoting its degradation. Phosphorylation shows circadian variations in the liver with a peak between CT10 to CT14. Phosphorylation at Ser-90 by CK2 is essential for its nuclear localization, its interaction with CLOCK and controls CLOCK nuclear entry. Dephosphorylation at Ser-78 is important for dimerization with CLOCK and transcriptional activity. Post-translationally, sumoylated on Lys-259 upon dimerization with CLOCK. Predominantly conjugated to poly-SUMO2/3 rather than SUMO1 and the level of these conjugates undergo rhythmic variation, peaking at CT9-CT12. Sumoylation localizes it exclusively to the PML body and promotes its ubiquitination in the PML body, ubiquitin-dependent proteasomal degradation and the transcriptional activity of the CLOCK-BMAL1 heterodimer. In terms of processing, undergoes lysosome-mediated degradation in a time-dependent manner in the liver.

It localises to the nucleus. The protein resides in the cytoplasm. Its subcellular location is the PML body. In terms of biological role, transcriptional activator which forms a core component of the circadian clock. The circadian clock, an internal time-keeping system, regulates various physiological processes through the generation of approximately 24 hour circadian rhythms in gene expression, which are translated into rhythms in metabolism and behavior. It is derived from the Latin roots 'circa' (about) and 'diem' (day) and acts as an important regulator of a wide array of physiological functions including metabolism, sleep, body temperature, blood pressure, endocrine, immune, cardiovascular, and renal function. Consists of two major components: the central clock, residing in the suprachiasmatic nucleus (SCN) of the brain, and the peripheral clocks that are present in nearly every tissue and organ system. Both the central and peripheral clocks can be reset by environmental cues, also known as Zeitgebers (German for 'timegivers'). The predominant Zeitgeber for the central clock is light, which is sensed by retina and signals directly to the SCN. The central clock entrains the peripheral clocks through neuronal and hormonal signals, body temperature and feeding-related cues, aligning all clocks with the external light/dark cycle. Circadian rhythms allow an organism to achieve temporal homeostasis with its environment at the molecular level by regulating gene expression to create a peak of protein expression once every 24 hours to control when a particular physiological process is most active with respect to the solar day. Transcription and translation of core clock components (CLOCK, NPAS2, BMAL1, BMAL2, PER1, PER2, PER3, CRY1 and CRY2) plays a critical role in rhythm generation, whereas delays imposed by post-translational modifications (PTMs) are important for determining the period (tau) of the rhythms (tau refers to the period of a rhythm and is the length, in time, of one complete cycle). A diurnal rhythm is synchronized with the day/night cycle, while the ultradian and infradian rhythms have a period shorter and longer than 24 hours, respectively. Disruptions in the circadian rhythms contribute to the pathology of cardiovascular diseases, cancer, metabolic syndromes and aging. A transcription/translation feedback loop (TTFL) forms the core of the molecular circadian clock mechanism. Transcription factors, CLOCK or NPAS2 and BMAL1 or BMAL2, form the positive limb of the feedback loop, act in the form of a heterodimer and activate the transcription of core clock genes and clock-controlled genes (involved in key metabolic processes), harboring E-box elements (5'-CACGTG-3') within their promoters. The core clock genes: PER1/2/3 and CRY1/2 which are transcriptional repressors form the negative limb of the feedback loop and interact with the CLOCK|NPAS2-BMAL1|BMAL2 heterodimer inhibiting its activity and thereby negatively regulating their own expression. This heterodimer also activates nuclear receptors NR1D1/2 and RORA/B/G, which form a second feedback loop and which activate and repress BMAL1 transcription, respectively. BMAL1 positively regulates myogenesis and negatively regulates adipogenesis via the transcriptional control of the genes of the canonical Wnt signaling pathway. Plays a role in normal pancreatic beta-cell function; regulates glucose-stimulated insulin secretion via the regulation of antioxidant genes NFE2L2/NRF2 and its targets SESN2, PRDX3, CCLC and CCLM. Negatively regulates the mTORC1 signaling pathway; regulates the expression of MTOR and DEPTOR. Controls diurnal oscillations of Ly6C inflammatory monocytes; rhythmic recruitment of the PRC2 complex imparts diurnal variation to chemokine expression that is necessary to sustain Ly6C monocyte rhythms. Regulates the expression of HSD3B2, STAR, PTGS2, CYP11A1, CYP19A1 and LHCGR in the ovary and also the genes involved in hair growth. Plays an important role in adult hippocampal neurogenesis by regulating the timely entry of neural stem/progenitor cells (NSPCs) into the cell cycle and the number of cell divisions that take place prior to cell-cycle exit. Regulates the circadian expression of CIART and KLF11. The CLOCK-BMAL1 heterodimer regulates the circadian expression of SERPINE1/PAI1, VWF, B3, CCRN4L/NOC, NAMPT, DBP, MYOD1, PPARGC1A, PPARGC1B, SIRT1, GYS2, F7, NGFR, GNRHR, BHLHE40/DEC1, ATF4, MTA1, KLF10 and also genes implicated in glucose and lipid metabolism. Promotes rhythmic chromatin opening, regulating the DNA accessibility of other transcription factors. The NPAS2-BMAL1 heterodimer positively regulates the expression of MAOA, F7 and LDHA and modulates the circadian rhythm of daytime contrast sensitivity by regulating the rhythmic expression of adenylate cyclase type 1 (ADCY1) in the retina. The preferred binding motif for the CLOCK-BMAL1 heterodimer is 5'-CACGTGA-3', which contains a flanking adenine nucleotide at the 3-prime end of the canonical 6-nucleotide E-box sequence. CLOCK specifically binds to the half-site 5'-CAC-3', while BMAL1 binds to the half-site 5'-GTGA-3'. The CLOCK-BMAL1 heterodimer also recognizes the non-canonical E-box motifs 5'-AACGTGA-3' and 5'-CATGTGA-3'. Essential for the rhythmic interaction of CLOCK with ASS1 and plays a critical role in positively regulating CLOCK-mediated acetylation of ASS1. Plays a role in protecting against lethal sepsis by limiting the expression of immune checkpoint protein CD274 in macrophages in a PKM2-dependent manner. Regulates the diurnal rhythms of skeletal muscle metabolism via transcriptional activation of genes promoting triglyceride synthesis (DGAT2) and metabolic efficiency (COQ10B). This chain is Basic helix-loop-helix ARNT-like protein 1 (BMAL1), found in Pongo abelii (Sumatran orangutan).